Here is a 1553-residue protein sequence, read N- to C-terminus: Sodium channel protein PaFPC1 (1553 aa).

The tract at residues 1-68 (MADNSPLIRE…SAHPDQALEQ (68 aa)) is disordered. Residues 1-140 (MADNSPLIRE…RVAISTMVQP (140 aa)) lie on the Cytoplasmic side of the membrane. Basic and acidic residues predominate over residues 34–60 (ENGKTEENKDNSRDKGRGANKDRDGSA). A helical transmembrane segment spans residues 141–159 (IFSYFIMITILIHCIFMIM). Residues 160–165 (PATQTT) lie on the Extracellular side of the membrane. A helical membrane pass occupies residues 166 to 186 (YILELVFLSIYTIEVVVKVLA). The Cytoplasmic segment spans residues 187 to 200 (RGFILHPFAYLRDP). A helical transmembrane segment spans residues 201–218 (WNWLDFLVTLIGYITLVV). Residues 219–224 (DLGHLY) lie on the Extracellular side of the membrane. Residues 225–241 (ALRAFRVLRSWRTVTIV) traverse the membrane as a helical segment. Residues 242 to 260 (PGWRTIVDALSLSITSLKD) are Cytoplasmic-facing. A helical transmembrane segment spans residues 261-280 (LVLLLLFSLFVFAVLGLQIY). The Extracellular portion of the chain corresponds to 281–360 (MGVLTQKCVK…PNYGYTSFDT (80 aa)). Cystine bridges form between Cys-288-Cys-337 and Cys-328-Cys-343. 4 N-linked (GlcNAc...) asparagine glycosylation sites follow: Asn-300, Asn-308, Asn-312, and Asn-330. Positions 361-385 (FGWAFLSVFRLVTLDYWEDLYQLAL) form an intramembrane region, pore-forming. Glu-378 lines the saxitoxin pocket. Residues 386–392 (RSAGPWH) are Extracellular-facing. A helical transmembrane segment spans residues 393 to 413 (ILFFIIVVFYGTFCFLNFILA). Residues 414–519 (VVVMSYTHMV…GAIGAVVLSP (106 aa)) lie on the Cytoplasmic side of the membrane. The chain crosses the membrane as a helical span at residues 520-538 (FFELFIAVIIVLNITFMAL). Residues 539-549 (DHHDMNIEFER) are Extracellular-facing. Residues 550 to 569 (ILRTGNYIFTSIYIVEAVLK) traverse the membrane as a helical segment. The Cytoplasmic segment spans residues 570 to 583 (IIALSPKFYFKDSW). The helical transmembrane segment at 584 to 603 (NVFDFIIVVFAILELGLEGV) threads the bilayer. Residues 604–605 (QG) lie on the Extracellular side of the membrane. The chain crosses the membrane as a helical span at residues 606–623 (LSVFRSFRLLRVFRLAKF). The Cytoplasmic segment spans residues 624 to 639 (WPTLNNFMSVMTKSYG). Residues 640–658 (AFVNVMYVMFLLLFIFAII) traverse the membrane as a helical segment. At 659 to 686 (GMQLFGMNYIDNMERFPDGDLPRWNFTD) the chain is on the extracellular side. The N-linked (GlcNAc...) asparagine glycan is linked to Asn-683. Residues 687–707 (FLHSFMIVFRALCGEWIESMW) constitute an intramembrane region (pore-forming). Glu-701 and Glu-704 together coordinate tetrodotoxin. Position 704 (Glu-704) interacts with saxitoxin. Residues 708–719 (DCMLVGDWSCIP) are Extracellular-facing. The cysteines at positions 709 and 717 are disulfide-linked. The chain crosses the membrane as a helical span at residues 720–740 (FFVAVFFVGNLVILNLLIALL). Over 741–857 (LNNYGSFCTS…VCFLLAKNKY (117 aa)) the chain is Cytoplasmic. The helical transmembrane segment at 858–875 (FQKFVTAVLVITSVLLAL) threads the bilayer. At 876–888 (EDIYLPQRPVLVN) the chain is on the extracellular side. A helical transmembrane segment spans residues 889–907 (ITLYVDYVLTAFFVIEMII). Residues 908-921 (MLFAVGFKKYFTSK) are Cytoplasmic-facing. The helical transmembrane segment at 922-940 (WYWLDFIVVVAYLLNFVLM) threads the bilayer. Residues 941–945 (CAGIE) lie on the Extracellular side of the membrane. Residues 946 to 964 (ALQTLRLLRVFRLFRPLSK) form a helical membrane-spanning segment. The Cytoplasmic portion of the chain corresponds to 965 to 981 (VNGMQVVTSTLVEAVPH). Residues 982–1001 (IFNVILVGIFFWLVFAIMGV) form a helical membrane-spanning segment. Over 1002–1047 (QLFAGKFYKCVDENSTVLSHEITMDRNDCLHENYTWENSPMNFDHV) the chain is Extracellular. Cys-1011 and Cys-1030 are disulfide-bonded. Asn-1015 carries an N-linked (GlcNAc...) asparagine glycan. N-linked (GlcNAc...) asparagine; atypical glycosylation is present at Asn-1028. A glycan (N-linked (GlcNAc...) asparagine) is linked at Asn-1034. An intramembrane region (pore-forming) is located at residues 1048-1069 (GNAYLSLLQVATFKGWLQIMND). Tetrodotoxin is bound at residue Gly-1062. Trp-1063 provides a ligand contact to saxitoxin. Residues 1070–1086 (AIDSREVHKQPIRETNI) lie on the Extracellular side of the membrane. A helical membrane pass occupies residues 1087–1108 (YMYLYFIFFIVFGSFFILKLFV). Residues 1109–1171 (CILIDIFRQQ…LMYDISVNRK (63 aa)) are Cytoplasmic-facing. Residues 1133–1146 (QLIYRRAVMRTMSA) form a linker region that may regulate channel inactivation region. A helical transmembrane segment spans residues 1172 to 1189 (FEYTMMILIILNVAVMAI). At 1190–1200 (DHYGQSMEFSE) the chain is on the extracellular side. Residues 1201–1219 (VLDYLNLIFIIIFFVECVI) traverse the membrane as a helical segment. The Cytoplasmic segment spans residues 1220 to 1231 (KVSGLRHHYFKD). A helical transmembrane segment spans residues 1232 to 1249 (PWNIIDFLYVVLAIAGLM). The Extracellular segment spans residues 1250-1262 (LSDVIEKYFISPT). The helical transmembrane segment at 1263-1279 (LLRILRILRVGRLLRYF) threads the bilayer. Topologically, residues 1280-1298 (QSARGMRLLLLALRKALRT) are cytoplasmic. The helical transmembrane segment at 1299-1316 (LFNVSFLLFVIMFVYAVF) threads the bilayer. Residues 1317-1338 (GMEFFMHIRDAGAIDDVYNFKT) are Extracellular-facing. The segment at residues 1339 to 1361 (FGQSIILLFQLATSAGWDGVYFA) is an intramembrane region (pore-forming). 2 residues coordinate tetrodotoxin: Gly-1354 and Asp-1356. Saxitoxin is bound at residue Asp-1356. The Extracellular segment spans residues 1362–1387 (IANEEDCRAPDHELGYPGNCGSRALG). Cysteines 1368 and 1381 form a disulfide. Residues 1388 to 1410 (IAYLVSYLIITCLVVINMYAAVI) traverse the membrane as a helical segment. Residues 1411-1553 (LDYVLEVYED…NAWRKHKQQN (143 aa)) lie on the Cytoplasmic side of the membrane.

It belongs to the sodium channel (TC 1.A.1.10) family. Detected in adult nerve cord, muscle, gut and mushroom-shaped accessory glands.

It is found in the cell membrane. Inhibited by the pore blockers saxitoxin and tetrodotoxin. Functionally, mediates the voltage-dependent sodium ion permeability of excitable membranes. The polypeptide is Sodium channel protein PaFPC1 (Periplaneta americana (American cockroach)).